A 595-amino-acid polypeptide reads, in one-letter code: DNA primase (595 aa).

A CHC2-type zinc finger spans residues cysteine 38 to cysteine 62. The Toprim domain occupies asparagine 250–proline 332. Positions 256, 300, and 302 each coordinate Mg(2+).

The protein belongs to the DnaG primase family. Monomer. Interacts with DnaB. It depends on Zn(2+) as a cofactor. Mg(2+) is required as a cofactor.

It carries out the reaction ssDNA + n NTP = ssDNA/pppN(pN)n-1 hybrid + (n-1) diphosphate.. In terms of biological role, RNA polymerase that catalyzes the synthesis of short RNA molecules used as primers for DNA polymerase during DNA replication. The polypeptide is DNA primase (Rickettsia felis (strain ATCC VR-1525 / URRWXCal2) (Rickettsia azadi)).